Here is a 333-residue protein sequence, read N- to C-terminus: Global transcription regulator sge1 (333 aa).

2 disordered regions span residues 93 to 139 (PPGE…PSVP) and 241 to 307 (QHQS…PQYQ).

It belongs to the MIT1/WOR1 family.

Its subcellular location is the nucleus. Global transcriptional regulator that acts as an activator of secondary metabolism. Required for expression of a yet uncharacterized secondary metabolism gene cluster containing a non-canonical non-ribosomal peptide synthetase. Not required for conidiogenesis nor for pathogenicity, but is involved in vegetative growth. This is Global transcription regulator sge1 from Gibberella fujikuroi (strain CBS 195.34 / IMI 58289 / NRRL A-6831) (Bakanae and foot rot disease fungus).